Consider the following 200-residue polypeptide: Charged multivesicular body protein 6-B (200 aa).

The N-myristoyl glycine moiety is linked to residue G2. The stretch at 9–102 (RRSRVTEQDK…FAQIEMKVIE (94 aa)) forms a coiled coil. A disordered region spans residues 165–200 (QEDLELPEAPSEPLSDTVPEKQAVKNRPKPQLVAAS). The short motif at 168–179 (LELPEAPSEPLS) is the Type-2 MIT-interacting motif element.

It belongs to the SNF7 family. As to quaternary structure, probable core component of the endosomal sorting required for transport complex III (ESCRT-III). ESCRT-III components are thought to multimerize to form a flat lattice on the perimeter membrane of the endosome.

The protein localises to the endomembrane system. Its subcellular location is the late endosome membrane. Functionally, probable core component of the endosomal sorting required for transport complex III (ESCRT-III) which is involved in multivesicular bodies (MVBs) formation and sorting of endosomal cargo proteins into MVBs. MVBs contain intraluminal vesicles (ILVs) that are generated by invagination and scission from the limiting membrane of the endosome and mostly are delivered to lysosomes enabling degradation of membrane proteins, such as stimulated growth factor receptors, lysosomal enzymes and lipids. In the ESCRT-III complex, it probably serves as an acceptor for the ESCRT-II complex on endosomal membranes. This Xenopus laevis (African clawed frog) protein is Charged multivesicular body protein 6-B (chmp6-b).